The following is a 112-amino-acid chain: Protein BEX5 (112 aa).

Basic and acidic residues-rich tracts occupy residues 1-12 and 30-51; these read MEKDPKERREEE and PKPR…REDM. The disordered stretch occupies residues 1 to 56; the sequence is MEKDPKERREEEQAPVQNEEACPMGGGEGPKPRENVRGDWDPPAQDFREDMPNGLV. Residues 101–105 form a his cluster region; sequence HHDHH. Position 109 (cysteine 109) interacts with Zn(2+).

The protein belongs to the BEX family. In terms of processing, ubiquitinated. Degraded by the proteasome.

The protein resides in the cytoplasm. This is Protein BEX5 (BEX5) from Bos taurus (Bovine).